The sequence spans 282 residues: Phosphate import ATP-binding protein PstB (282 aa).

In terms of domain architecture, ABC transporter spans 36 to 277 (IEVKNLNFFY…PARKETEDYI (242 aa)). ATP is bound at residue 68–75 (GPSGCGKS).

It belongs to the ABC transporter superfamily. Phosphate importer (TC 3.A.1.7) family. The complex is composed of two ATP-binding proteins (PstB), two transmembrane proteins (PstC and PstA) and a solute-binding protein (PstS).

The protein localises to the cell inner membrane. It carries out the reaction phosphate(out) + ATP + H2O = ADP + 2 phosphate(in) + H(+). In terms of biological role, part of the ABC transporter complex PstSACB involved in phosphate import. Responsible for energy coupling to the transport system. In Burkholderia pseudomallei (strain 1710b), this protein is Phosphate import ATP-binding protein PstB.